The sequence spans 583 residues: L-arabonate dehydratase (583 aa).

The [4Fe-4S] cluster site is built by cysteine 56, cysteine 124, and cysteine 197.

It belongs to the IlvD/Edd family. Homodimer. The cofactor is [4Fe-4S] cluster.

It catalyses the reaction L-arabinonate = 2-dehydro-3-deoxy-L-arabinonate + H2O. Activity is enhanced by Mg(2+), being optimal with a concentration of 1-10 mM Mg(2+). Its function is as follows. Catalyzes the dehydration of L-arabonate to L-2-keto-3-deoxyarabonate (L-KDA). Is involved in a degradation pathway of L-arabinose that allows A.brasilense to grow on L-arabinose as a sole carbon source. To a lesser extent, can also use D-xylonate as substrate, but not D-galactonate, D-arabonate, and D-gluconate. The polypeptide is L-arabonate dehydratase (araC) (Azospirillum brasilense).